The sequence spans 252 residues: Neurotrophic factor BDNF precursor form (252 aa).

A signal peptide spans 1-18 (MTILFLTMVISYFGCMKA). Residues 19–133 (APMKEANVRG…AANMSMRVRR (115 aa)) constitute a propeptide that is removed on maturation. The tract at residues 43–62 (LESVNGPKAGSRGLTSSSSS) is disordered. N126 carries an N-linked (GlcNAc...) asparagine glycan. Cystine bridges form between C146–C213, C191–C242, and C201–C244.

Belongs to the NGF-beta family. Monomers and homodimers. Binds to NTRK2/TRKB. Can form heterodimers with other neurotrophin family members, such as NTF3 and NTF4 (in vitro), but the physiological relevance of this is not clear. BDNF precursor form: interacts with the heterodimer formed by NGFR and SORCS2. Mature BDNF has much lower affinity for the heterodimer formed by NGFR and SORCS2. Post-translationally, N-glycosylated and glycosulfated, contrary to mature BDNF. In terms of processing, mature BDNF is produced by proteolytic removal of the propeptide, catalyzed by a FURIN family member. In addition, the precursor form is proteolytically cleaved within the propeptide, but this is not an obligatory intermediate for the production of mature BDNF. Can be converted into mature BDNF by plasmin (PLG). In terms of tissue distribution, brain and central nervous system.

Its subcellular location is the secreted. In terms of biological role, important signaling molecule that activates signaling cascades downstream of NTRK2. During development, promotes the survival and differentiation of selected neuronal populations of the peripheral and central nervous systems. Participates in axonal growth, pathfinding and in the modulation of dendritic growth and morphology. Major regulator of synaptic transmission and plasticity at adult synapses in many regions of the CNS. The versatility of BDNF is emphasized by its contribution to a range of adaptive neuronal responses including long-term potentiation (LTP), long-term depression (LTD), certain forms of short-term synaptic plasticity, as well as homeostatic regulation of intrinsic neuronal excitability. Its function is as follows. Important signaling molecule that activates signaling cascades downstream of NTRK2. Activates signaling cascades via the heterodimeric receptor formed by NGFR and SORCS2. Signaling via NGFR and SORCS2 plays a role in synaptic plasticity and long-term depression (LTD). Binding to NGFR and SORCS2 promotes neuronal apoptosis. Promotes neuronal growth cone collapse. This is Neurotrophic factor BDNF precursor form (BDNF) from Sus scrofa (Pig).